Here is a 728-residue protein sequence, read N- to C-terminus: MPGALPMKKISLAVLSLTTLLAACGQPQTSPQSPAASAPSVAVPRTHALDIDPAQVVTTKNGDMYVRNQLVVNLRGHSADALADQLGGRVLDQLPELDVALIELPQGKDARSVGVALMREGQVLYAAAQTVQRQIEPVRTAQDQLGAQAVNQVFDTLPQYALDSNHLHAKAAWDAGFTGKGVKVGVIDDPSDVSHPDLRPNWAGKAYDPATNTTYTTVQGWIDAIDGFDGKVDNKVDPGIEHGTAVASTIAAAKNGQGIVGVAPDSKFYTAAIFQPGFIGDYLVARSVIWTVNQGAQVINNSWGGTGYSPLLKQAFDYALERDITVVVSAGNSYREEWRNPAQLPGVIASAALDINNDKAGFSTYGRHVSVAAPGVDVMLASPLFINADGTRKTGGYTKDGGSGYQLISGTSFSGPYTSGVAAVILGAKPDLDPHQVRRLMEETADGSVGSNKAGFDRETGYGLIRMDKLADRLKGSNMPQKGGAGRVKVEIQTPGGYVPGILADVILEGDGADGAVYAVQTDSDGYANFVSIAPGTYTLRVATPDLTLTGGQSDERDTYVGKLTVTSGSVLSTVAPQRVVLVKGAVDLNPVDPYEPNDTMAEAKPISYGKMTELAYIFGKPRDVDFFSFTGKAGDNIQADVHARTAIGGSLDSFLVLRDASGKNLAYNDDANGQDSVITFKLPADGTYFLEVSSCNILCKSNGDDASKGQDDDSPFNKYVLELQLLK.

The first 22 residues, 1-22 (MPGALPMKKISLAVLSLTTLLA), serve as a signal peptide directing secretion. The propeptide occupies 23–148 (ACGQPQTSPQ…RTAQDQLGAQ (126 aa)). The Peptidase S8 domain maps to 159-471 (QYALDSNHLH…YGLIRMDKLA (313 aa)). Active-site charge relay system residues include D188, H242, and S412.

This sequence belongs to the peptidase S8 family.

It localises to the secreted. The chain is Probable subtilase-type serine protease DR_A0283 from Deinococcus radiodurans (strain ATCC 13939 / DSM 20539 / JCM 16871 / CCUG 27074 / LMG 4051 / NBRC 15346 / NCIMB 9279 / VKM B-1422 / R1).